The sequence spans 478 residues: DNA-directed RNA polymerase subunit alpha (478 aa).

The tract at residues 1–341 is alpha N-terminal domain (alpha-NTD); it reads MNKKIQDFFL…LDCMRLLNYE (341 aa). The alpha C-terminal domain (alpha-CTD) stretch occupies residues 365 to 478; it reads RFYNSREDKT…KLGSRNEKNL (114 aa).

This sequence belongs to the RNA polymerase alpha chain family. In terms of assembly, in plastids the minimal PEP RNA polymerase catalytic core is composed of four subunits: alpha, beta, beta', and beta''. When a (nuclear-encoded) sigma factor is associated with the core the holoenzyme is formed, which can initiate transcription.

The protein localises to the plastid. It localises to the chloroplast. The catalysed reaction is RNA(n) + a ribonucleoside 5'-triphosphate = RNA(n+1) + diphosphate. Functionally, DNA-dependent RNA polymerase catalyzes the transcription of DNA into RNA using the four ribonucleoside triphosphates as substrates. The sequence is that of DNA-directed RNA polymerase subunit alpha (rpoA) from Tetradesmus obliquus (Green alga).